Consider the following 211-residue polypeptide: Metalloproteinase inhibitor 3 (211 aa).

The signal sequence occupies residues 1–23 (MTPWLGLVVLLGSWSLGDWGAEA). C24 contributes to the Zn(2+) binding site. 2 involved in metalloproteinase-binding regions span residues 24–27 (CTCS) and 88–89 (ES). Intrachain disulfides connect C24/C91, C26/C118, C36/C143, C145/C192, C150/C155, and C163/C184. Residues 24-143 (CTCSPSHPQD…GLNYRYHLGC (120 aa)) form the NTR domain. A mediates interaction with EFEMP1 region spans residues 105–188 (TGRVYDGKMY…SKHYACIRQK (84 aa)). Residue N207 is glycosylated (N-linked (GlcNAc...) asparagine).

The protein belongs to the protease inhibitor I35 (TIMP) family. In terms of assembly, interacts with EFEMP1. Interacts with KDR.

Its subcellular location is the secreted. It localises to the extracellular space. It is found in the extracellular matrix. Functionally, mediates a variety of processes including matrix regulation and turnover, inflammation, and angiogenesis, through reversible inhibition of zinc protease superfamily enzymes, primarily matrix metalloproteinases (MMPs). Regulates extracellular matrix (ECM) remodeling through inhibition of matrix metalloproteinases (MMP) including MMP-1, MMP-2, MMP-3, MMP-7, MMP-9, MMP-13, MMP-14 and MMP-15. Additionally, modulates the processing of amyloid precursor protein (APP) and apolipoprotein E receptor ApoER2 by inhibiting two alpha-secretases ADAM10 and ADAM17. Functions as a tumor suppressor and a potent inhibitor of angiogenesis. Exerts its anti-angiogenic effect by directly interacting with vascular endothelial growth factor (VEGF) receptor-2/KDR, preventing its binding to the VEGFA ligand. Selectively induces apoptosis in angiogenic endothelial cells through a caspase-independent cell death pathway. Mechanistically, inhibits matrix-induced focal adhesion kinase PTK2 tyrosine phosphorylation and association with paxillin/PXN and disrupts the incorporation of ITGB3, PTK2 and PXN into focal adhesion contacts on the matrix. This Equus caballus (Horse) protein is Metalloproteinase inhibitor 3 (TIMP3).